Reading from the N-terminus, the 286-residue chain is MLHDVGSINVNWFEAALLGLVQGLTEFLPISSSAHLRIVGSFLPNAADPGAAFTAITQLGTETAVIVYFWRDIVRIVKAWAGTLTRRVPTDDPDARMGWLVILGSLPIIVLGLIFQDQIESVLRSLWIVATMLIVFGLILAVADAVGRQERELTRLTYKHGIFYGFAQAMALIPGVSRSGGTITAGLLMGYTREAAARYSFLLAIPAVFGSGLYQLYKVMSKDGITGPYGLPETALATLIAFVVGYVIIGWFLKFVSTRSYRLFVWYRIFLGLALYLLLGFNVISA.

The next 7 helical transmembrane spans lie at 50 to 70 (GAAF…VYFW), 97 to 117 (MGWL…IFQD), 126 to 146 (LWIV…ADAV), 156 to 176 (LTYK…IPGV), 200 to 220 (SFLL…YKVM), 236 to 256 (LATL…LKFV), and 264 to 284 (FVWY…FNVI).

This sequence belongs to the UppP family.

It localises to the cell membrane. It carries out the reaction di-trans,octa-cis-undecaprenyl diphosphate + H2O = di-trans,octa-cis-undecaprenyl phosphate + phosphate + H(+). In terms of biological role, catalyzes the dephosphorylation of undecaprenyl diphosphate (UPP). Confers resistance to bacitracin. This is Undecaprenyl-diphosphatase from Arthrobacter sp. (strain FB24).